Here is a 227-residue protein sequence, read N- to C-terminus: Ribose-5-phosphate isomerase A (227 aa).

Substrate-binding positions include 26–29 (TGST), 82–85 (DGAD), and 95–98 (KGGG). The active-site Proton acceptor is E104. K122 contributes to the substrate binding site.

The protein belongs to the ribose 5-phosphate isomerase family. As to quaternary structure, homodimer.

It carries out the reaction aldehydo-D-ribose 5-phosphate = D-ribulose 5-phosphate. It participates in carbohydrate degradation; pentose phosphate pathway; D-ribose 5-phosphate from D-ribulose 5-phosphate (non-oxidative stage): step 1/1. Functionally, catalyzes the reversible conversion of ribose-5-phosphate to ribulose 5-phosphate. This chain is Ribose-5-phosphate isomerase A, found in Streptococcus pneumoniae (strain Hungary19A-6).